The chain runs to 785 residues: Endonuclease MutS2 (785 aa).

335-342 serves as a coordination point for ATP; that stretch reads GPNTGGKT. One can recognise a Smr domain in the interval 710-785; sequence LDLRGERYED…GNGVTIVEFK (76 aa).

It belongs to the DNA mismatch repair MutS family. MutS2 subfamily. Homodimer. Binds to stalled ribosomes, contacting rRNA.

Endonuclease that is involved in the suppression of homologous recombination and thus may have a key role in the control of bacterial genetic diversity. In terms of biological role, acts as a ribosome collision sensor, splitting the ribosome into its 2 subunits. Detects stalled/collided 70S ribosomes which it binds and splits by an ATP-hydrolysis driven conformational change. Acts upstream of the ribosome quality control system (RQC), a ribosome-associated complex that mediates the extraction of incompletely synthesized nascent chains from stalled ribosomes and their subsequent degradation. Probably generates substrates for RQC. This is Endonuclease MutS2 from Listeria welshimeri serovar 6b (strain ATCC 35897 / DSM 20650 / CCUG 15529 / CIP 8149 / NCTC 11857 / SLCC 5334 / V8).